The sequence spans 404 residues: CD209 antigen (404 aa).

The Cytoplasmic portion of the chain corresponds to 1 to 37 (MSDSKEPRLQQLGLLEEEQLRGLGFRQTRGYKSLAGC). Short sequence motifs (endocytosis signal) lie at residues 14–15 (LL), 16–18 (EEE), and 31–34 (YKSL). A helical; Signal-anchor for type II membrane protein membrane pass occupies residues 38–58 (LGHGVLVLQLLSFTLLAGLFV). At 59–404 (QVSKVPSSIS…APATPNPPPA (346 aa)) the chain is on the extracellular side. N-linked (GlcNAc...) asparagine glycosylation is present at Asn-80. 7 consecutive repeat copies span residues 96-118 (KLQEIYQELTQLKAAVSELPEKS), 119-141 (KQQEIYQELTQLKAAVSELPEKS), 142-164 (KLQEIYQELTQLKAAVSELPEKS), 165-187 (KLQEIYQELTRLKAAVGELPEKC), 188-210 (KLQEIYQELTRLKAAVDELPEKS), 211-233 (KLQEIYQELTQLKAAVGELPEKS), and 234-257 (RLQEIYQELTQLKAAVERLCHPCP). Residues 96 to 257 (KLQEIYQELT…AVERLCHPCP (162 aa)) are 7 X approximate tandem repeats. Cystine bridges form between Cys-256–Cys-267, Cys-284–Cys-377, and Cys-356–Cys-369. The C-type lectin domain maps to 263–378 (FQGNCYFISN…CNLAKFWICK (116 aa)). Positions 347, 349, 351, 354, 365, and 366 each coordinate Ca(2+).

As to quaternary structure, homotetramer. Interacts with C1QBP; the interaction is indicative for a C1q:C1QBP:CD209 signaling complex. Interacts with ICAM2 and ICAM3 by binding to mannose-like carbohydrates. Interacts (via C-type lectin domain) with CEACAM1 (via Lewis X moieties); this interaction is regulated by the glycosylation pattern of CEACAM1 on cell types and regulates contact between dendritic cells and neutrophils.

The protein localises to the membrane. Pathogen-recognition receptor expressed on the surface of immature dendritic cells (DCs) and involved in initiation of primary immune response. Thought to mediate the endocytosis of pathogens which are subsequently degraded in lysosomal compartments. The receptor returns to the cell membrane surface and the pathogen-derived antigens are presented to resting T-cells via MHC class II proteins to initiate the adaptive immune response. Probably recognizes in a calcium-dependent manner high mannose N-linked oligosaccharides in a variety of pathogen antigens. In terms of biological role, on DCs it is a high affinity receptor for ICAM2 and ICAM3 by binding to mannose-like carbohydrates. May act as a DC rolling receptor that mediates transendothelial migration of DC presursors from blood to tissues by binding endothelial ICAM2. Seems to regulate DC-induced T-cell proliferation by binding to ICAM3 on T-cells in the immunological synapse formed between DC and T-cells. In Pongo pygmaeus (Bornean orangutan), this protein is CD209 antigen (CD209).